The following is a 284-amino-acid chain: Putative cysteine-rich repeat secretory protein 7 (284 aa).

The N-terminal stretch at 1–24 is a signal peptide; that stretch reads MARIILTAPLFYFFFSLLSHQTMS. Gnk2-homologous domains follow at residues 26 to 128 and 134 to 244; these read PQHM…NVSF and SKPV…TFVL. Residues 247 to 284 are disordered; that stretch reads PAPSPSSLPPISPTSSPPLSLPPQLPPPLSQPPPPLST.

Belongs to the cysteine-rich repeat secretory protein family.

It is found in the secreted. In Arabidopsis thaliana (Mouse-ear cress), this protein is Putative cysteine-rich repeat secretory protein 7 (CRRSP7).